A 158-amino-acid chain; its full sequence is Ribonuclease H (158 aa).

An RNase H type-1 domain is found at Glu-3–Glu-144. 4 residues coordinate Mg(2+): Asp-12, Glu-50, Asp-72, and Asp-136. The interval Gln-137–Ser-158 is disordered.

The protein belongs to the RNase H family. Monomer. Mg(2+) serves as cofactor.

Its subcellular location is the cytoplasm. It carries out the reaction Endonucleolytic cleavage to 5'-phosphomonoester.. Its function is as follows. Endonuclease that specifically degrades the RNA of RNA-DNA hybrids. This Shewanella sp. (strain ANA-3) protein is Ribonuclease H.